A 151-amino-acid polypeptide reads, in one-letter code: uncharacterized protein (151 aa).

This is an uncharacterized protein from Lepidoptera (butterflies and moths).